The sequence spans 196 residues: Small ribosomal subunit protein uS4c (196 aa).

The span at 1–14 shows a compositional bias: basic residues; it reads MSRYRGPRLKKIRR. Residues 1 to 43 form a disordered region; it reads MSRYRGPRLKKIRRLGALPGLTRKTPKSGSNPKKKFHSGKKEQ. Positions 89 to 169 constitute an S4 RNA-binding domain; sequence MRLDNILFRL…LPKHLTIDTL (81 aa).

This sequence belongs to the universal ribosomal protein uS4 family. In terms of assembly, part of the 30S ribosomal subunit. Contacts protein S5. The interaction surface between S4 and S5 is involved in control of translational fidelity.

It localises to the plastid. It is found in the chloroplast. Its function is as follows. One of the primary rRNA binding proteins, it binds directly to 16S rRNA where it nucleates assembly of the body of the 30S subunit. Functionally, with S5 and S12 plays an important role in translational accuracy. In Melica uniflora (Wood melick grass), this protein is Small ribosomal subunit protein uS4c (rps4).